Consider the following 487-residue polypeptide: Malonate-semialdehyde dehydrogenase 3 (487 aa).

NAD(+)-binding residues include Phe-154, Lys-178, Glu-181, Arg-182, and Ser-231. The Nucleophile role is filled by Cys-286. Glu-386 is an NAD(+) binding site.

The protein belongs to the aldehyde dehydrogenase family. IolA subfamily. Homotetramer.

It catalyses the reaction 3-oxopropanoate + NAD(+) + CoA + H2O = hydrogencarbonate + acetyl-CoA + NADH + H(+). The catalysed reaction is 2-methyl-3-oxopropanoate + NAD(+) + CoA + H2O = propanoyl-CoA + hydrogencarbonate + NADH + H(+). The protein operates within polyol metabolism; myo-inositol degradation into acetyl-CoA; acetyl-CoA from myo-inositol: step 7/7. In terms of biological role, catalyzes the oxidation of malonate semialdehyde (MSA) and methylmalonate semialdehyde (MMSA) into acetyl-CoA and propanoyl-CoA, respectively. Is involved in a myo-inositol catabolic pathway. Bicarbonate, and not CO2, is the end-product of the enzymatic reaction. The polypeptide is Malonate-semialdehyde dehydrogenase 3 (Bacillus cereus (strain ZK / E33L)).